The sequence spans 305 residues: Tetraacyldisaccharide 4'-kinase (305 aa).

ATP is bound at residue 39–46 (SVGGNGKT).

It belongs to the LpxK family.

The enzyme catalyses a lipid A disaccharide + ATP = a lipid IVA + ADP + H(+). Its pathway is glycolipid biosynthesis; lipid IV(A) biosynthesis; lipid IV(A) from (3R)-3-hydroxytetradecanoyl-[acyl-carrier-protein] and UDP-N-acetyl-alpha-D-glucosamine: step 6/6. Its function is as follows. Transfers the gamma-phosphate of ATP to the 4'-position of a tetraacyldisaccharide 1-phosphate intermediate (termed DS-1-P) to form tetraacyldisaccharide 1,4'-bis-phosphate (lipid IVA). This is Tetraacyldisaccharide 4'-kinase from Pseudoalteromonas atlantica (strain T6c / ATCC BAA-1087).